The sequence spans 233 residues: Uracil-DNA glycosylase (233 aa).

The Proton acceptor role is filled by aspartate 70.

This sequence belongs to the uracil-DNA glycosylase (UDG) superfamily. UNG family.

It is found in the cytoplasm. It catalyses the reaction Hydrolyzes single-stranded DNA or mismatched double-stranded DNA and polynucleotides, releasing free uracil.. In terms of biological role, excises uracil residues from the DNA which can arise as a result of misincorporation of dUMP residues by DNA polymerase or due to deamination of cytosine. This chain is Uracil-DNA glycosylase, found in Helicobacter pylori (strain HPAG1).